The sequence spans 574 residues: Urease subunit alpha (574 aa).

Residues 131-574 enclose the Urease domain; that stretch reads GAIDSHIHFI…LPMAQRYLLI (444 aa). Residues histidine 136, histidine 138, and lysine 219 each contribute to the Ni(2+) site. Lysine 219 carries the N6-carboxylysine modification. Histidine 221 contacts substrate. The Ni(2+) site is built by histidine 248 and histidine 274. Histidine 322 (proton donor) is an active-site residue. Aspartate 362 is a binding site for Ni(2+).

Belongs to the metallo-dependent hydrolases superfamily. Urease alpha subunit family. Heterotrimer of UreA (gamma), UreB (beta) and UreC (alpha) subunits. Three heterotrimers associate to form the active enzyme. Requires Ni cation as cofactor. In terms of processing, carboxylation allows a single lysine to coordinate two nickel ions.

It is found in the cytoplasm. The enzyme catalyses urea + 2 H2O + H(+) = hydrogencarbonate + 2 NH4(+). The protein operates within nitrogen metabolism; urea degradation; CO(2) and NH(3) from urea (urease route): step 1/1. The protein is Urease subunit alpha of Prochlorococcus marinus (strain MIT 9303).